The sequence spans 179 residues: MSLKQRYRETIQPKLLKDLSLSNIHEVPKVLKVTVNRGLGEAATNAKSLEASVNELAQITGQKVVITRAKKAIAAFKIRQGMPIGCAVTLRGDRMYAFLERFINLALPRIRDFRGVSPKSFDGRGNYTVGVREQIIFPEISFDKIDAIRGMDITIVTSARTDEEGRALLREMGMPFRSN.

This sequence belongs to the universal ribosomal protein uL5 family. As to quaternary structure, part of the 50S ribosomal subunit; part of the 5S rRNA/L5/L18/L25 subcomplex. Contacts the 5S rRNA and the P site tRNA. Forms a bridge to the 30S subunit in the 70S ribosome.

Functionally, this is one of the proteins that bind and probably mediate the attachment of the 5S RNA into the large ribosomal subunit, where it forms part of the central protuberance. In the 70S ribosome it contacts protein S13 of the 30S subunit (bridge B1b), connecting the 2 subunits; this bridge is implicated in subunit movement. Contacts the P site tRNA; the 5S rRNA and some of its associated proteins might help stabilize positioning of ribosome-bound tRNAs. The polypeptide is Large ribosomal subunit protein uL5 (Synechococcus sp. (strain CC9311)).